Here is a 216-residue protein sequence, read N- to C-terminus: 3-isopropylmalate dehydratase small subunit (216 aa).

The protein belongs to the LeuD family. LeuD type 1 subfamily. As to quaternary structure, heterodimer of LeuC and LeuD.

The catalysed reaction is (2R,3S)-3-isopropylmalate = (2S)-2-isopropylmalate. It participates in amino-acid biosynthesis; L-leucine biosynthesis; L-leucine from 3-methyl-2-oxobutanoate: step 2/4. Catalyzes the isomerization between 2-isopropylmalate and 3-isopropylmalate, via the formation of 2-isopropylmaleate. This Acidovorax ebreus (strain TPSY) (Diaphorobacter sp. (strain TPSY)) protein is 3-isopropylmalate dehydratase small subunit.